Reading from the N-terminus, the 258-residue chain is Bidirectional sugar transporter SWEET7 (258 aa).

The Extracellular portion of the chain corresponds to 1-11 (MVFAHLNLLRK). Residues 12-32 (IVGIIGNFIALCLFLSPTPTF) traverse the membrane as a helical segment. One can recognise a MtN3/slv 1 domain in the interval 12-100 (IVGIIGNFIA…IFFVYCGRQK (89 aa)). The Cytoplasmic segment spans residues 33–46 (VRIVKKKSVEEYSP). The chain crosses the membrane as a helical span at residues 47-67 (IPYLATLINCLVWVLYGLPTV). The Extracellular portion of the chain corresponds to 68 to 73 (HPDSTL). The chain crosses the membrane as a helical span at residues 74–94 (VITINGTGILIEIVFLTIFFV). At 95–102 (YCGRQKQR) the chain is on the cytoplasmic side. A helical transmembrane segment spans residues 103–123 (LIISAVIAAETAFIAILAVLV). Topologically, residues 124–134 (LTLQHTTEKRT) are extracellular. Residues 135-155 (MSVGIVCCVFNVMMYASPLSV) form a helical membrane-spanning segment. Positions 136 to 221 (SVGIVCCVFN…LYGAYYKSTK (86 aa)) constitute a MtN3/slv 2 domain. Residues 156 to 166 (MKMVIKTKSVE) lie on the Cytoplasmic side of the membrane. The helical transmembrane segment at 167 to 187 (FMPFWLSVAGFLNAGVWTIYA) threads the bilayer. Residues 188–193 (LMPFDP) lie on the Extracellular side of the membrane. Residues 194–214 (FMAIPNGIGCLFGLAQLILYG) traverse the membrane as a helical segment. The Cytoplasmic portion of the chain corresponds to 215-258 (AYYKSTKRIMAERENQPGYVGLSSAIARTGSEKTANTNQEPNNV).

It belongs to the SWEET sugar transporter family. Forms heterooligomers with SWEET8, SWEET11, SWEET13, SWEET16 and SWEET17.

The protein resides in the cell membrane. Mediates both low-affinity uptake and efflux of sugar across the plasma membrane. The polypeptide is Bidirectional sugar transporter SWEET7 (Arabidopsis thaliana (Mouse-ear cress)).